The following is a 388-amino-acid chain: AIAAVITFLILFTIFGNALVILAVLTSRSLRAPQNLFLVSLAAADILVATLIIPFSLANELLGYWYFRRTWCEVYLALDVLFCTSSIVHLCAISLDRYWAVSRALEYNSKRTPRXIKCIILTVWLIAAAISLPPLIYKGDQGPQPRGRPQCKLNQEAWYILSSSIGSFFAPCLIMILVYLRIYVIAKRSNRRGPRAKGASREGKSKQPHPFPAGASSARPPTLTSSLAVAGEANGHSKPTGEKEGKTPEDPGTLTLPPSWPAFPNSGEGQKEGICGTSPEEEAEEEEEECEPQAAPASSASACNPPLQQPQGSRVLATLRGQVLLGRGLGAAGGQWWRRRAQLTREKRFTFVLAVVIGVFVLCWFPFFFSYSLGAICPQRCKVPHGLF.

A helical transmembrane segment spans residues Ala1–Leu25. The Cytoplasmic segment spans residues Thr26–Leu36. A helical transmembrane segment spans residues Phe37 to Leu62. At Gly63–Cys72 the chain is on the extracellular side. Cys72 and Cys151 form a disulfide bridge. Residues Glu73 to Leu95 traverse the membrane as a helical segment. Residues Asp96 to Lys117 are Cytoplasmic-facing. Residues Cys118–Asp140 form a helical membrane-spanning segment. Topologically, residues Gln141–Glu156 are extracellular. The helical transmembrane segment at Ala157–Leu180 threads the bilayer. Residues Arg181–Val352 are Cytoplasmic-facing. A disordered region spans residues Gly193–Gln309. A compositionally biased stretch (basic and acidic residues) spans Pro239 to Glu249. Residues Pro279 to Glu291 show a composition bias toward acidic residues. The span at Pro292–Ala302 shows a compositional bias: low complexity. The chain crosses the membrane as a helical span at residues Leu353–Ile376. Topologically, residues Cys377–His385 are extracellular. Residues Gly386 to Phe388 traverse the membrane as a helical segment.

The protein belongs to the G-protein coupled receptor 1 family. Adrenergic receptor subfamily. ADRA2B sub-subfamily. Interacts with RAB26. Interacts with PPP1R9B.

Its subcellular location is the cell membrane. Functionally, alpha-2 adrenergic receptors mediate the catecholamine-induced inhibition of adenylate cyclase through the action of G proteins. This chain is Alpha-2B adrenergic receptor (ADRA2B), found in Orycteropus afer (Aardvark).